Consider the following 315-residue polypeptide: Protein MFI (315 aa).

As to quaternary structure, can homodimerize. Interacts with MFF; the interaction inhibits MFF interaction with DNM1L. Enriched in the pancreatic beta cell and the testis and is expressed at low levels in other tissues tested.

It is found in the cytoplasm. The protein localises to the cytosol. Its subcellular location is the mitochondrion outer membrane. Functionally, acts as an inhibitor of mitochondrial fission. Interacts with MFF and prevents DNM1L recruitment to mitochondria, promoting a more fused mitochondrial network. The protein is Protein MFI of Mus musculus (Mouse).